We begin with the raw amino-acid sequence, 726 residues long: Sister chromatid cohesion protein SCC4 (726 aa).

7 TPR repeats span residues 7–40 (AEGL…QISF), 88–121 (FQNY…ASSV), 132–165 (CNFN…ASHI), 229–262 (RLRL…IQQL), 443–477 (PTIL…CIEA), 531–564 (ASIL…AHNH), and 572–605 (AQYL…AKKL). The tract at residues 697–726 (SVGIEGPSPAPSSSRLVGLDTGKRWGKRRM) is disordered.

Belongs to the SCC4/mau-2 family. As to quaternary structure, interacts with SCC2 to form the cohesin loading complex. As to expression, expressed ubiquitously.

Its subcellular location is the nucleus. The protein localises to the cytoplasm. Functionally, essential protein required for cell fate determination during embryogenesis. Involved in sister chromatid cohesion. Forms a complex with SCC2, which is required for the association of the cohesin complex with chromosomes. This is Sister chromatid cohesion protein SCC4 from Arabidopsis thaliana (Mouse-ear cress).